Reading from the N-terminus, the 507-residue chain is Polygalacturonase (507 aa).

A signal peptide spans methionine 1–alanine 20. A propeptide spanning residues alanine 21–histidine 54 is cleaved from the precursor. 6 PbH1 repeats span residues cysteine 215–alanine 241, serine 242–threonine 263, serine 265–serine 285, valine 295–threonine 316, alanine 324–glutamine 345, and arginine 358–cysteine 385. Residue aspartate 256 is the Proton donor of the active site. An N-linked (GlcNAc...) asparagine glycan is attached at asparagine 267. Residue histidine 279 is part of the active site.

Belongs to the glycosyl hydrolase 28 family.

It is found in the secreted. It localises to the cell wall. It catalyses the reaction (1,4-alpha-D-galacturonosyl)n+m + H2O = (1,4-alpha-D-galacturonosyl)n + (1,4-alpha-D-galacturonosyl)m.. This chain is Polygalacturonase (JNA2), found in Juniperus ashei (Ozark white cedar).